A 279-amino-acid polypeptide reads, in one-letter code: Phosphatidylglycerol--prolipoprotein diacylglyceryl transferase (279 aa).

3 consecutive transmembrane segments (helical) span residues 22–42, 52–72, and 89–109; these read WYGI…QAAL, LIDI…IYFV, and IWHG…SGII. Arg137 serves as a coordination point for a 1,2-diacyl-sn-glycero-3-phospho-(1'-sn-glycerol). 2 consecutive transmembrane segments (helical) span residues 203-223 and 235-255; these read LGET…FVEA and IRVA…FVIY.

It belongs to the Lgt family.

It is found in the cell membrane. The enzyme catalyses L-cysteinyl-[prolipoprotein] + a 1,2-diacyl-sn-glycero-3-phospho-(1'-sn-glycerol) = an S-1,2-diacyl-sn-glyceryl-L-cysteinyl-[prolipoprotein] + sn-glycerol 1-phosphate + H(+). Its pathway is protein modification; lipoprotein biosynthesis (diacylglyceryl transfer). Functionally, catalyzes the transfer of the diacylglyceryl group from phosphatidylglycerol to the sulfhydryl group of the N-terminal cysteine of a prolipoprotein, the first step in the formation of mature lipoproteins. The polypeptide is Phosphatidylglycerol--prolipoprotein diacylglyceryl transferase (Staphylococcus epidermidis (strain ATCC 12228 / FDA PCI 1200)).